Reading from the N-terminus, the 352-residue chain is MRVLGLNQERGEVELVVEVLEDLYYLFLLVRKGDVVYGWTTRQLRIERATGEERGERIPVYLGVEVEKVSYAKFSEKLRFTGRVVEAPEEVYAKGSFHTIQVGVGDRVKIVKKSGIDGFTRNILEKAASKIRRVLLISVGDEEVAVGYLSPVGVEVRAVVGYSPVGRGKESSLDERYREPIASIVQRIFESGRAEHVDEVVVAVNERLAEVVSRVLGELGVKARVVKVSEGGEAGIYELLRGGQSRELLSSVRLPLELAEVERVLQELFSGKGKAVAGLENVEKVAEWGIVKTLIVSDALLFGEESRERVLKVLGEVFSRNGKIFIVPEESEAGRKLKPFGGALAELYYSLE.

It belongs to the eukaryotic release factor 1 family. Pelota subfamily. As to quaternary structure, monomer. A divalent metal cation serves as cofactor.

It localises to the cytoplasm. Functionally, may function in recognizing stalled ribosomes, interact with stem-loop structures in stalled mRNA molecules, and effect endonucleolytic cleavage of the mRNA. May play a role in the release non-functional ribosomes and degradation of damaged mRNAs. Has endoribonuclease activity. The protein is Protein pelota homolog of Thermofilum pendens (strain DSM 2475 / Hrk 5).